We begin with the raw amino-acid sequence, 573 residues long: BICD family-like cargo adapter 1 (573 aa).

The disordered stretch occupies residues 67-97 (ERPSDPGEHPQAEPGSLAEGAGPQPPPSQDP). The segment covering 68-77 (RPSDPGEHPQ) has biased composition (basic and acidic residues). The CC1 box signature appears at 113 to 117 (AARLG). The stretch at 118-376 (KALLERNQDM…QLWEAYCQVR (259 aa)) forms a coiled coil. Residues 386–412 (DSADSAVSTDSSMDESSETSSAKDVPA) form a disordered region. Positions 387-396 (SADSAVSTDS) are enriched in low complexity. Residues 440 to 525 (LSVEMTALKE…LEAWQDDMHR (86 aa)) are a coiled coil.

The protein belongs to the BICDR family. As to quaternary structure, part of a tripartite complex with dynein and dynactin, acts an adapter linking the dynein motor complex and dynactin. Interacts with KIF1C. Interacts with RAB6A and RAB6B; interaction is specific to Rab6.

It is found in the cytoplasm. The protein localises to the cytoskeleton. It localises to the microtubule organizing center. Its subcellular location is the centrosome. In terms of biological role, acts as an adapter protein linking the dynein motor complex to various cargos and converts dynein from a non-processive to a highly processive motor in the presence of dynactin. Facilitates the interaction between dynein and dynactin and activates dynein processivity (the ability to move along a microtubule for a long distance without falling off the track). Predominantly recruits 2 dyneins, which increases both the force and speed of the microtubule motor. Component of secretory vesicle machinery in developing neurons that acts as a regulator of neurite outgrowth. Regulates the secretory vesicle transport by controlling the accumulation of Rab6-containing secretory vesicles in the pericentrosomal region restricting anterograde secretory transport during the early phase of neuronal differentiation, thereby inhibiting neuritogenesis. The polypeptide is BICD family-like cargo adapter 1 (BICDL1) (Homo sapiens (Human)).